We begin with the raw amino-acid sequence, 307 residues long: Protoheme IX farnesyltransferase (307 aa).

A run of 8 helical transmembrane segments spans residues 24–44 (ISLLKPRVMSLVIFTALVGLV), 52–72 (PVIAFTAILCIAVGAGAAGAL), 115–135 (VVLGLLVNVLAGALLAFTIFF), 152–172 (IVIGGLSGALPPMVAWAAASG), 179–199 (VILVAIIFFWTPPHFWALSLY), 224–244 (QILLYTLFLVPLALSPVMLGE), 245–265 (AGLAYGVVAGVTGLGMLLLAV), and 284–304 (FGFSILYLFLLFATLLAEALV).

Belongs to the UbiA prenyltransferase family. Protoheme IX farnesyltransferase subfamily.

The protein resides in the cell inner membrane. It catalyses the reaction heme b + (2E,6E)-farnesyl diphosphate + H2O = Fe(II)-heme o + diphosphate. The protein operates within porphyrin-containing compound metabolism; heme O biosynthesis; heme O from protoheme: step 1/1. In terms of biological role, converts heme B (protoheme IX) to heme O by substitution of the vinyl group on carbon 2 of heme B porphyrin ring with a hydroxyethyl farnesyl side group. This is Protoheme IX farnesyltransferase from Azorhizobium caulinodans (strain ATCC 43989 / DSM 5975 / JCM 20966 / LMG 6465 / NBRC 14845 / NCIMB 13405 / ORS 571).